A 145-amino-acid chain; its full sequence is D-aminoacyl-tRNA deacylase (145 aa).

The short motif at 137-138 (GP) is the Gly-cisPro motif, important for rejection of L-amino acids element.

It belongs to the DTD family. As to quaternary structure, homodimer.

Its subcellular location is the cytoplasm. The catalysed reaction is glycyl-tRNA(Ala) + H2O = tRNA(Ala) + glycine + H(+). It carries out the reaction a D-aminoacyl-tRNA + H2O = a tRNA + a D-alpha-amino acid + H(+). An aminoacyl-tRNA editing enzyme that deacylates mischarged D-aminoacyl-tRNAs. Also deacylates mischarged glycyl-tRNA(Ala), protecting cells against glycine mischarging by AlaRS. Acts via tRNA-based rather than protein-based catalysis; rejects L-amino acids rather than detecting D-amino acids in the active site. By recycling D-aminoacyl-tRNA to D-amino acids and free tRNA molecules, this enzyme counteracts the toxicity associated with the formation of D-aminoacyl-tRNA entities in vivo and helps enforce protein L-homochirality. The polypeptide is D-aminoacyl-tRNA deacylase (Francisella tularensis subsp. novicida (strain U112)).